Here is a 276-residue protein sequence, read N- to C-terminus: 1H-3-hydroxy-4-oxoquinaldine 2,4-dioxygenase (276 aa).

The AB hydrolase-1 domain occupies 28 to 150 (PAILLLPGWC…TLLKDPERWR (123 aa)). Residues 36 to 38 (WCH), 100 to 101 (HS), and W160 contribute to the substrate site. The Proton donor/acceptor role is filled by H251.

It belongs to the AB hydrolase superfamily. It depends on None. Contrary to most other dioxygenases, this enzyme does not require a cofactor for catalysis. as a cofactor.

The enzyme catalyses 3-hydroxy-2-methyl-1H-quinolin-4-one + O2 = N-acetylanthranilate + CO + H(+). Its function is as follows. Ring-cleaving dioxygenase involved in quinaldine degradation and utilization. The polypeptide is 1H-3-hydroxy-4-oxoquinaldine 2,4-dioxygenase (hod) (Paenarthrobacter nitroguajacolicus (Arthrobacter nitroguajacolicus)).